The chain runs to 432 residues: D-amino acid dehydrogenase (432 aa).

Residue V3–W17 participates in FAD binding.

Belongs to the DadA oxidoreductase family. Requires FAD as cofactor.

The catalysed reaction is a D-alpha-amino acid + A + H2O = a 2-oxocarboxylate + AH2 + NH4(+). The protein operates within amino-acid degradation; D-alanine degradation; NH(3) and pyruvate from D-alanine: step 1/1. Oxidative deamination of D-amino acids. This Shigella sonnei (strain Ss046) protein is D-amino acid dehydrogenase.